Here is a 438-residue protein sequence, read N- to C-terminus: tRNA modification GTPase MnmE (438 aa).

R21, E79, and K118 together coordinate (6S)-5-formyl-5,6,7,8-tetrahydrofolate. The 148-residue stretch at 215–362 (GFSIVLIGAP…LEARIEQIVR (148 aa)) folds into the TrmE-type G domain. Position 225 (N225) interacts with K(+). GTP is bound by residues 225 to 230 (NAGKSS), 244 to 250 (TDIPGTT), and 269 to 272 (DTAG). S229 contacts Mg(2+). K(+) contacts are provided by T244, I246, and T249. T250 provides a ligand contact to Mg(2+). A (6S)-5-formyl-5,6,7,8-tetrahydrofolate-binding site is contributed by K438.

It belongs to the TRAFAC class TrmE-Era-EngA-EngB-Septin-like GTPase superfamily. TrmE GTPase family. Homodimer. Heterotetramer of two MnmE and two MnmG subunits. It depends on K(+) as a cofactor.

It is found in the cytoplasm. Its function is as follows. Exhibits a very high intrinsic GTPase hydrolysis rate. Involved in the addition of a carboxymethylaminomethyl (cmnm) group at the wobble position (U34) of certain tRNAs, forming tRNA-cmnm(5)s(2)U34. The polypeptide is tRNA modification GTPase MnmE (Maricaulis maris (strain MCS10) (Caulobacter maris)).